The sequence spans 387 residues: Postreplication repair E3 ubiquitin-protein ligase rad18 (387 aa).

The RING-type zinc-finger motif lies at Cys29 to Arg67. Residues Asp119–Arg153 form a disordered region. Over residues Ser122–Leu131 the composition is skewed to acidic residues. A UBZ4-type zinc finger spans residues Leu156 to Ser183. Zn(2+) contacts are provided by Cys159, Cys162, His174, and Cys178. Residues His174–Phe206 are disordered. Residues Ser177–Tyr192 are compositionally biased toward low complexity. Positions Tyr240 to Val274 constitute an SAP domain. The disordered stretch occupies residues Lys335 to Ser387.

Belongs to the RAD18 family. In terms of assembly, interacts with E2 ubc2, forming a complex with ubiquitin ligase activity.

It is found in the nucleus. The enzyme catalyses S-ubiquitinyl-[E2 ubiquitin-conjugating enzyme]-L-cysteine + [acceptor protein]-L-lysine = [E2 ubiquitin-conjugating enzyme]-L-cysteine + N(6)-ubiquitinyl-[acceptor protein]-L-lysine.. Its pathway is protein modification; protein ubiquitination. In terms of biological role, E3 RING-finger protein, member of the UBC2/RAD6 epistasis group. Associates to the E2 ubiquitin conjugating enzyme ubc2/rad6 to form the ubc2-rad18 ubiquitin ligase complex involved in postreplicative repair (PRR) of damaged DNA. This Schizosaccharomyces pombe (strain 972 / ATCC 24843) (Fission yeast) protein is Postreplication repair E3 ubiquitin-protein ligase rad18 (rhp18).